Consider the following 838-residue polypeptide: Extragenic suppressor of kinetochore protein 1 (838 aa).

A phosphoserine mark is found at Ser-411 and Ser-418. The interval 411 to 468 (SDEDDDDSTFSDKNSKDFKETEDMNGAEDMHGRAPQITKDNLNLTTTDSPMSEAEPVS) is disordered. Thr-419 bears the Phosphothreonine mark. The span at 423-442 (KNSKDFKETEDMNGAEDMHG) shows a compositional bias: basic and acidic residues. A phosphoserine mark is found at Ser-425, Ser-459, Ser-468, and Ser-491. Polar residues predominate over residues 448-460 (TKDNLNLTTTDSP). Thr-493 bears the Phosphothreonine mark. Residue Ser-494 is modified to Phosphoserine. The span at 690 to 700 (ELESNSSDDDV) shows a compositional bias: acidic residues. Disordered stretches follow at residues 690 to 745 (ELES…DQDN) and 757 to 838 (ISDN…NHGK). Phosphoserine is present on residues Ser-711 and Ser-713. The span at 714–723 (NDEDDGNDED) shows a compositional bias: acidic residues. The segment covering 724 to 734 (PLSREMSRRLS) has biased composition (basic and acidic residues). 2 stretches are compositionally biased toward acidic residues: residues 768–779 (SDEDDDDDDEVV) and 806–818 (SDSEEEDGNDSSD).

It belongs to the SAPS family. Interacts with ppe1 and mis12.

The protein localises to the nucleus. Has a role in chromosome segregation. May provide a dynamic connection between kinetochore microtubules and kinetochore chromatin. The protein is Extragenic suppressor of kinetochore protein 1 (ekc1) of Schizosaccharomyces pombe (strain 972 / ATCC 24843) (Fission yeast).